We begin with the raw amino-acid sequence, 318 residues long: Very-long-chain 3-oxoacyl-CoA reductase-A (318 aa).

The helical transmembrane segment at 15–35 threads the bilayer; the sequence is FWYLGVLAAAWWGLRAACCLL. Position 54–83 (54–83) interacts with NADP(+); the sequence is GKWAVVTGATDGIGKAYAEELARRGMSIVL. The next 2 membrane-spanning stretches (helical) occupy residues 187-207 and 281-301; these read GVIL…LTVY and AIMG…SMGM. S194 provides a ligand contact to substrate. Y207 functions as the Proton acceptor in the catalytic mechanism.

Belongs to the short-chain dehydrogenases/reductases (SDR) family. 17-beta-HSD 3 subfamily.

The protein localises to the endoplasmic reticulum membrane. It carries out the reaction a very-long-chain (3R)-3-hydroxyacyl-CoA + NADP(+) = a very-long-chain 3-oxoacyl-CoA + NADPH + H(+). It catalyses the reaction 17beta-estradiol + NAD(+) = estrone + NADH + H(+). The catalysed reaction is 17beta-estradiol + NADP(+) = estrone + NADPH + H(+). It participates in lipid metabolism; fatty acid biosynthesis. It functions in the pathway steroid biosynthesis; estrogen biosynthesis. Its function is as follows. Catalyzes the second of the four reactions of the long-chain fatty acids elongation cycle. This endoplasmic reticulum-bound enzymatic process, allows the addition of two carbons to the chain of long- and very long-chain fatty acids/VLCFAs per cycle. This enzyme has a 3-ketoacyl-CoA reductase activity, reducing 3-ketoacyl-CoA to 3-hydroxyacyl-CoA, within each cycle of fatty acid elongation. Thereby, it may participate in the production of VLCFAs of different chain lengths that are involved in multiple biological processes as precursors of membrane lipids and lipid mediators. May also catalyze the transformation of estrone (E1) into estradiol (E2) and play a role in estrogen formation. This chain is Very-long-chain 3-oxoacyl-CoA reductase-A (hsd17b12-a), found in Xenopus laevis (African clawed frog).